The following is a 291-amino-acid chain: Acetyl-coenzyme A carboxylase carboxyl transferase subunit beta (291 aa).

Residues 23–291 enclose the CoA carboxyltransferase N-terminal domain; sequence VYTKDPVSGE…TPASASVAKS (269 aa).

Belongs to the AccD/PCCB family. As to quaternary structure, acetyl-CoA carboxylase is a heterohexamer composed of biotin carboxyl carrier protein (AccB), biotin carboxylase (AccC) and two subunits each of ACCase subunit alpha (AccA) and ACCase subunit beta (AccD).

Its subcellular location is the cytoplasm. It carries out the reaction N(6)-carboxybiotinyl-L-lysyl-[protein] + acetyl-CoA = N(6)-biotinyl-L-lysyl-[protein] + malonyl-CoA. The protein operates within lipid metabolism; malonyl-CoA biosynthesis; malonyl-CoA from acetyl-CoA: step 1/1. Component of the acetyl coenzyme A carboxylase (ACC) complex. Biotin carboxylase (BC) catalyzes the carboxylation of biotin on its carrier protein (BCCP) and then the CO(2) group is transferred by the transcarboxylase to acetyl-CoA to form malonyl-CoA. The chain is Acetyl-coenzyme A carboxylase carboxyl transferase subunit beta from Opitutus terrae (strain DSM 11246 / JCM 15787 / PB90-1).